We begin with the raw amino-acid sequence, 784 residues long: N-alpha-acetyltransferase 35, NatC auxiliary subunit homolog (784 aa).

Disordered regions lie at residues 1–23 (MYPS…VAEP), 320–353 (NTLD…PPAF), and 606–630 (SKTQ…NKKT). Over residues 617–630 (KNRKAAKPKKNKKT) the composition is skewed to basic residues.

It belongs to the MAK10 family. Component of the N-terminal acetyltransferase C (NatC) complex, which is composed of Naa35, Sbat/Naa38 and Naa30A.

It localises to the cytoplasm. In terms of biological role, auxillary component of the N-terminal acetyltransferase C (NatC) complex which catalyzes acetylation of N-terminal methionine residues. This is N-alpha-acetyltransferase 35, NatC auxiliary subunit homolog from Drosophila melanogaster (Fruit fly).